We begin with the raw amino-acid sequence, 431 residues long: Serine hydroxymethyltransferase 2 (431 aa).

Residues Leu-131 and 135 to 137 contribute to the (6S)-5,6,7,8-tetrahydrofolate site; that span reads GHL. Lys-240 is modified (N6-(pyridoxal phosphate)lysine).

The protein belongs to the SHMT family. Homodimer. Pyridoxal 5'-phosphate is required as a cofactor.

It localises to the cytoplasm. The catalysed reaction is (6R)-5,10-methylene-5,6,7,8-tetrahydrofolate + glycine + H2O = (6S)-5,6,7,8-tetrahydrofolate + L-serine. The protein operates within one-carbon metabolism; tetrahydrofolate interconversion. Its pathway is amino-acid biosynthesis; glycine biosynthesis; glycine from L-serine: step 1/1. Functionally, catalyzes the reversible interconversion of serine and glycine with tetrahydrofolate (THF) serving as the one-carbon carrier. This reaction serves as the major source of one-carbon groups required for the biosynthesis of purines, thymidylate, methionine, and other important biomolecules. Also exhibits THF-independent aldolase activity toward beta-hydroxyamino acids, producing glycine and aldehydes, via a retro-aldol mechanism. This Vibrio parahaemolyticus serotype O3:K6 (strain RIMD 2210633) protein is Serine hydroxymethyltransferase 2.